Consider the following 226-residue polypeptide: Probable functional amyloid protease FapD (226 aa).

The signal sequence occupies residues 1–18; it reads MRTLILSLLLLVDLTTQA. The 131-residue stretch at 50–180 folds into the Peptidase C39 domain; the sequence is QKTDFSCGAA…KGWNGIVFAV (131 aa). Cys56 is a catalytic residue.

This sequence belongs to the FapD family.

Its subcellular location is the periplasm. Probable protease that might be involved in processing fibril precursors. Upon overexpression of the endogenous six-gene locus (fapA-fapF), cells form large clumps during liquid growth, make large amounts of biofilm and produce amyloid fibrils. This chain is Probable functional amyloid protease FapD, found in Pseudomonas aeruginosa (strain ATCC 15692 / DSM 22644 / CIP 104116 / JCM 14847 / LMG 12228 / 1C / PRS 101 / PAO1).